A 919-amino-acid polypeptide reads, in one-letter code: Aminodeoxychorismate synthase, chloroplastic (919 aa).

The transit peptide at 1 to 45 (MNMNFSFCSTSSELSYPSENVLRFSVASRLFSPKWKKSFISLPCR) directs the protein to the chloroplast. One can recognise a Glutamine amidotransferase type-1 domain in the interval 86–342 (RTLLIDNYDS…KDITVNYWSR (257 aa)). Cys172 serves as the catalytic Nucleophile. Catalysis depends on residues His316 and Glu318. Residues 436–910 (IFMELFGKNR…KTRAPANAVM (475 aa)) form a PABB component region.

In the C-terminal section; belongs to the anthranilate synthase component I family.

The protein localises to the plastid. The protein resides in the chloroplast. It carries out the reaction chorismate + L-glutamine = 4-amino-4-deoxychorismate + L-glutamate. Its pathway is cofactor biosynthesis; tetrahydrofolate biosynthesis; 4-aminobenzoate from chorismate: step 1/2. Activated by chorismate and inhibited by dihydrofolate and methotrexate. Its function is as follows. Bifunctional enzyme that catalyzes the biosynthesis of 4-amino-4-deoxychorismate (ADC) from chorismate and glutamine. In the first step, a glutamine amidotransferase generates ammonia that is channelled between the binding sites of glutamine and chorismate and used along with chorismate in the second step, catalyzed by aminodeoxychorismate synthase, to produce ADC. Required for the synthesis of 4-aminobenzoate (PABA), an important component in tetrahydrofolate biosynthesis. Does not possess ADC lyase activity. This is Aminodeoxychorismate synthase, chloroplastic (ADCS) from Arabidopsis thaliana (Mouse-ear cress).